A 122-amino-acid polypeptide reads, in one-letter code: Large ribosomal subunit protein uL14 (122 aa).

Belongs to the universal ribosomal protein uL14 family. As to quaternary structure, part of the 50S ribosomal subunit. Forms a cluster with proteins L3 and L19. In the 70S ribosome, L14 and L19 interact and together make contacts with the 16S rRNA in bridges B5 and B8.

In terms of biological role, binds to 23S rRNA. Forms part of two intersubunit bridges in the 70S ribosome. The sequence is that of Large ribosomal subunit protein uL14 from Salinispora tropica (strain ATCC BAA-916 / DSM 44818 / JCM 13857 / NBRC 105044 / CNB-440).